The chain runs to 559 residues: Glycerol kinase (559 aa).

Residue Thr-20 coordinates ADP. ATP is bound by residues Thr-20, Ser-21, and Ser-22. Residue Thr-20 participates in sn-glycerol 3-phosphate binding. Residue Arg-24 participates in ADP binding. Residues Arg-94, Glu-95, and Tyr-148 each contribute to the sn-glycerol 3-phosphate site. Positions 94, 95, and 148 each coordinate glycerol. Gly-252 is a binding site for beta-D-fructose 1,6-bisphosphate. Asp-265 is a binding site for sn-glycerol 3-phosphate. Glycerol is bound by residues Asp-265 and Gln-266. Residues Thr-287, Gly-332, Gly-433, and Asn-437 each coordinate ADP. 3 residues coordinate ATP: Thr-287, Gly-332, and Gly-433. Residues 532-552 (IFCSLPLGFFIVSSMVMLIGA) traverse the membrane as a helical segment.

This sequence belongs to the FGGY kinase family. As to expression, widely expressed in fetal and adult tissues. The sole isoform expressed in adult liver and kidney.

The protein resides in the mitochondrion outer membrane. It localises to the nucleus. Its subcellular location is the cytoplasm. The protein localises to the cytosol. It catalyses the reaction glycerol + ATP = sn-glycerol 3-phosphate + ADP + H(+). It participates in polyol metabolism; glycerol degradation via glycerol kinase pathway; sn-glycerol 3-phosphate from glycerol: step 1/1. Its activity is regulated as follows. Potassium and magnesium-dependent. Functionally, kinase that plays a key role in glycerol metabolism, catalyzing its phosphorylation to produce sn-glycerol 3-phosphate. Sn-glycerol 3-phosphate is a crucial intermediate in various metabolic pathways, such as the synthesis of glycerolipids and triglycerides, glycogenesis, glycolysis and gluconeogenesis. This is Glycerol kinase from Homo sapiens (Human).